A 309-amino-acid polypeptide reads, in one-letter code: Methionyl-tRNA formyltransferase (309 aa).

(6S)-5,6,7,8-tetrahydrofolate is bound at residue 109 to 112; that stretch reads SLLP.

This sequence belongs to the Fmt family.

The enzyme catalyses L-methionyl-tRNA(fMet) + (6R)-10-formyltetrahydrofolate = N-formyl-L-methionyl-tRNA(fMet) + (6S)-5,6,7,8-tetrahydrofolate + H(+). In terms of biological role, attaches a formyl group to the free amino group of methionyl-tRNA(fMet). The formyl group appears to play a dual role in the initiator identity of N-formylmethionyl-tRNA by promoting its recognition by IF2 and preventing the misappropriation of this tRNA by the elongation apparatus. This is Methionyl-tRNA formyltransferase from Clostridioides difficile (strain 630) (Peptoclostridium difficile).